Consider the following 429-residue polypeptide: Adenylosuccinate synthetase (429 aa).

Residues 12 to 18 (GDEGKGK) and 40 to 42 (GHT) each bind GTP. The active-site Proton acceptor is the Asp-13. Asp-13 and Gly-40 together coordinate Mg(2+). Residues 13–16 (DEGK), 38–41 (NAGH), Thr-129, Arg-143, Gln-223, Thr-238, and Arg-302 each bind IMP. Catalysis depends on His-41, which acts as the Proton donor. 298 to 304 (TVTGRKR) is a binding site for substrate. GTP contacts are provided by residues Arg-304, 330 to 332 (KLD), and 412 to 414 (STS).

This sequence belongs to the adenylosuccinate synthetase family. Homodimer. Requires Mg(2+) as cofactor.

The protein localises to the cytoplasm. The catalysed reaction is IMP + L-aspartate + GTP = N(6)-(1,2-dicarboxyethyl)-AMP + GDP + phosphate + 2 H(+). It participates in purine metabolism; AMP biosynthesis via de novo pathway; AMP from IMP: step 1/2. Its function is as follows. Plays an important role in the de novo pathway of purine nucleotide biosynthesis. Catalyzes the first committed step in the biosynthesis of AMP from IMP. The sequence is that of Adenylosuccinate synthetase from Sphingopyxis alaskensis (strain DSM 13593 / LMG 18877 / RB2256) (Sphingomonas alaskensis).